A 165-amino-acid chain; its full sequence is Natriuretic peptide Na-NP (165 aa).

Positions 1–25 (MVGLSRLAGGGLLLVLALLPLALDG) are cleaved as a signal peptide. Residues 26-83 (KPAPEALHKPPTGLRTSLAALRILGYLRPDSKQSRAARDRMLHPEQQVGGGGDSRPLQ) constitute a propeptide that is removed on maturation. Residues 56-68 (SKQSRAARDRMLH) are compositionally biased toward basic and acidic residues. Disordered stretches follow at residues 56-100 (SKQS…QKID) and 135-165 (PDSK…SRVI). Residues cysteine 94 and cysteine 110 are joined by a disulfide bond. The propeptide occupies 129–165 (ILEYLRPDSKRSRATRDRMLHPEQQVGGGGGGGSRVI). Residues 135-149 (PDSKRSRATRDRMLH) are compositionally biased toward basic and acidic residues. Gly residues predominate over residues 154–165 (VGGGGGGGSRVI).

This sequence belongs to the natriuretic peptide family. In terms of tissue distribution, expressed by the venom gland.

Its subcellular location is the secreted. Its function is as follows. Natriuretic peptide that dose-dependently induces the rapid relaxation of rat aortic strips phenylephrine-precontracted. Acts by stimulating cGMP production in a dose-dependent manner (by probably activating NPR1 and/or NPR2). May also show potent hypotensive effects. This is Natriuretic peptide Na-NP from Naja atra (Chinese cobra).